The primary structure comprises 1977 residues: Protein rotatin homolog (1977 aa).

The segment at 141–166 (SVSSLSSNDIPSQATESADSSSNQIY) is disordered.

It belongs to the rotatin family. Interacts with Rcd4;this complex is recruited to daughter centrioles before their conversion to centrosomes.

Its subcellular location is the cytoplasm. It localises to the cytoskeleton. The protein localises to the microtubule organizing center. The protein resides in the centrosome. It is found in the centriole. In terms of biological role, participes in the structural integrity of both centrioles and basal bodies and in centriole cohesion. Participates in the later stages of centriole assembly through the interaction with Rcd4 leading to the centriole to centrosome conversion. This is Protein rotatin homolog from Drosophila melanogaster (Fruit fly).